A 707-amino-acid chain; its full sequence is Integrator complex subunit 13 (707 aa).

Residues 565–625 (PPEEEERKKR…AEAEVIKDSP (61 aa)) are compositionally biased toward basic and acidic residues. Positions 565–651 (PPEEEERKKR…TGPAEKSKGP (87 aa)) are disordered. The stretch at 567–622 (EEEERKKRGRKREDKEEKAEKPPKENEHEKKWQESERVKSVLDREKEDLAEAEVIK) forms a coiled coil. A Nuclear localization signal (NLS) motif is present at residues 573-583 (KRGRKREDKEE). Residues 650–695 (GPMSLLSLWSSRINTANSRKHQEFVGRLNSVNNKAELYQHLKEENG) are cleavage module binding motif (CMBM).

It belongs to the Integrator subunit 13 family. As to quaternary structure, component of the Integrator complex, composed of core subunits INTS1, INTS2, INTS3, INTS4, INTS5, INTS6, INTS7, INTS8, INTS9/RC74, INTS10, INTS11/CPSF3L, INTS12, INTS13, INTS14 and INTS15. The core complex associates with protein phosphatase 2A subunits PPP2CA and PPP2R1A, to form the Integrator-PP2A (INTAC) complex. INTS13 is part of the tail subcomplex, composed of INTS10, INTS13, INTS14 and INTS15.

It localises to the nucleus. Its subcellular location is the cytoplasm. In terms of biological role, component of the integrator complex, a multiprotein complex that terminates RNA polymerase II (Pol II) transcription in the promoter-proximal region of genes. The integrator complex provides a quality checkpoint during transcription elongation by driving premature transcription termination of transcripts that are unfavorably configured for transcriptional elongation: the complex terminates transcription by (1) catalyzing dephosphorylation of the C-terminal domain (CTD) of Pol II subunit POLR2A/RPB1 and SUPT5H/SPT5, (2) degrading the exiting nascent RNA transcript via endonuclease activity and (3) promoting the release of Pol II from bound DNA. The integrator complex is also involved in terminating the synthesis of non-coding Pol II transcripts, such as enhancer RNAs (eRNAs), small nuclear RNAs (snRNAs), telomerase RNAs and long non-coding RNAs (lncRNAs). Within the integrator complex, INTS13 is part of the integrator tail module and acts as a platform for the recruitment of transcription factors at promoters. The polypeptide is Integrator complex subunit 13 (Xenopus tropicalis (Western clawed frog)).